The following is an 89-amino-acid chain: Peroxidase (89 aa).

Position 52 (H52) interacts with heme. Ca(2+) contacts are provided by T53 and D68.

The cofactor is heme b. Ca(2+) serves as cofactor.

The protein resides in the secreted. It carries out the reaction 2 a phenolic donor + H2O2 = 2 a phenolic radical donor + 2 H2O. Its function is as follows. Removal of H(2)O(2), oxidation of toxic reductants, biosynthesis and degradation of lignin, suberization, auxin catabolism, response to environmental stresses such as wounding, pathogen attack and oxidative stress. These functions might be dependent on each isozyme/isoform in each plant tissue. Active against p-coumaryl alcohol, coniferyl alcohol and coniferyl aldehyde. The protein is Peroxidase of Ginkgo biloba (Ginkgo).